The sequence spans 447 residues: Elongation factor 1-alpha (447 aa).

Residues 5-230 (KFHINIVVIG…DQINDAKRPS (226 aa)) enclose the tr-type G domain. A G1 region spans residues 14-21 (GHVDSGKS). 14–21 (GHVDSGKS) is a GTP binding site. Lys-55 carries the post-translational modification N6,N6-dimethyllysine. Residues 70-74 (GITID) form a G2 region. Residue Lys-79 is modified to N6,N6,N6-trimethyllysine. The tract at residues 91–94 (DAPG) is G3. Residues 91–95 (DAPGH) and 153–156 (NKMD) each bind GTP. The G4 stretch occupies residues 153-156 (NKMD). An N6,N6,N6-trimethyllysine modification is found at Lys-187. The tract at residues 194 to 196 (SGF) is G5. An N6-methyllysine modification is found at Lys-261. Glu-289 is modified (5-glutamyl glycerylphosphorylethanolamine). At Lys-306 the chain carries N6,N6,N6-trimethyllysine. At Glu-362 the chain carries 5-glutamyl glycerylphosphorylethanolamine. At Lys-396 the chain carries N6,N6,N6-trimethyllysine.

The protein belongs to the TRAFAC class translation factor GTPase superfamily. Classic translation factor GTPase family. EF-Tu/EF-1A subfamily. As to expression, was detected in all tissues examined but was most abundant in roots and salt-adapted cultured cells.

The protein resides in the cytoplasm. Its function is as follows. This protein promotes the GTP-dependent binding of aminoacyl-tRNA to the A-site of ribosomes during protein biosynthesis. The polypeptide is Elongation factor 1-alpha (Nicotiana tabacum (Common tobacco)).